A 287-amino-acid polypeptide reads, in one-letter code: MDPDDAPPIRRSGFVAVIGRTNVGKSSLVNALAGERATIVSRHPNTTRRSVRVISRVGDAELVLVDTPGIAAAHDELSARLRRWVDDEWDGADRALLVVDAERGVGARERELASRLKPSDVAVVARIDRVRRARTLAVLAELAQVPLAEYFVASVRTGEGIEELRSYLASSLPEGPALYEAGVALDLPRATYVAEVVREEFLHHLRDELPQALACQVESWSDDGVEVVVYVERPSQRAIVLGHEGRVLAAVRRQAQRRLRAYPPLTLRVKVQRDWRRSARMLDELGL.

The Era-type G domain maps to 11–174; the sequence is RSGFVAVIGR…RSYLASSLPE (164 aa). GTP-binding positions include 19-26 and 66-70; these read GRTNVGKS and DTPGI. A KH type-2 domain is found at 205–273; the sequence is LRDELPQALA…PLTLRVKVQR (69 aa).

The protein belongs to the TRAFAC class TrmE-Era-EngA-EngB-Septin-like GTPase superfamily. Era GTPase family. In terms of assembly, monomer.

The protein resides in the cytoplasm. It localises to the cell membrane. Its function is as follows. An essential GTPase that binds both GDP and GTP, with rapid nucleotide exchange. Plays a role in 16S rRNA processing and 30S ribosomal subunit biogenesis and possibly also in cell cycle regulation and energy metabolism. This chain is GTPase Era, found in Acidimicrobium ferrooxidans (strain DSM 10331 / JCM 15462 / NBRC 103882 / ICP).